A 356-amino-acid chain; its full sequence is Peptide chain release factor 1 (356 aa).

Residue Gln-233 is modified to N5-methylglutamine.

Belongs to the prokaryotic/mitochondrial release factor family. In terms of processing, methylated by PrmC. Methylation increases the termination efficiency of RF1.

It is found in the cytoplasm. Functionally, peptide chain release factor 1 directs the termination of translation in response to the peptide chain termination codons UAG and UAA. This Symbiobacterium thermophilum (strain DSM 24528 / JCM 14929 / IAM 14863 / T) protein is Peptide chain release factor 1.